The sequence spans 467 residues: Cis-zeatin O-glucosyltransferase 1 (467 aa).

Residue His21 is the Proton acceptor of the active site. Residues His21 and Asn91 each contribute to the an anthocyanidin site. Asp127 serves as the catalytic Charge relay. UDP-alpha-D-glucose is bound by residues Ala343, Gln345, His360, Trp363, Asn364, Ser365, Glu368, Asp384, and Gln385.

Belongs to the UDP-glycosyltransferase family. Highly expressed in root. Expressed at lower level in kernel and cob. Weakly expressed in leaves. Weakly or not expressed in stems.

The catalysed reaction is cis-zeatin + UDP-alpha-D-glucose = O-beta-D-glucosyl-cis-zeatin + UDP + H(+). Functionally, utilizes UDP-glucose as the sugar donor and catalyzes the formation of O-beta-D-glucosyl-cis-zeatin from cis-zeatin. May regulate active versus storage forms of cytokinins and could have an impact on seed growth. The polypeptide is Cis-zeatin O-glucosyltransferase 1 (CISZOG1) (Zea mays (Maize)).